Consider the following 640-residue polypeptide: 1-deoxy-D-xylulose-5-phosphate synthase (640 aa).

Residues His79 and 120-122 (AHS) each bind thiamine diphosphate. Asp151 lines the Mg(2+) pocket. Thiamine diphosphate contacts are provided by residues 152–153 (GA), Asn180, Tyr289, and Glu371. Position 180 (Asn180) interacts with Mg(2+).

Belongs to the transketolase family. DXPS subfamily. As to quaternary structure, homodimer. It depends on Mg(2+) as a cofactor. Thiamine diphosphate is required as a cofactor.

It carries out the reaction D-glyceraldehyde 3-phosphate + pyruvate + H(+) = 1-deoxy-D-xylulose 5-phosphate + CO2. It functions in the pathway metabolic intermediate biosynthesis; 1-deoxy-D-xylulose 5-phosphate biosynthesis; 1-deoxy-D-xylulose 5-phosphate from D-glyceraldehyde 3-phosphate and pyruvate: step 1/1. Catalyzes the acyloin condensation reaction between C atoms 2 and 3 of pyruvate and glyceraldehyde 3-phosphate to yield 1-deoxy-D-xylulose-5-phosphate (DXP). This is 1-deoxy-D-xylulose-5-phosphate synthase from Erythrobacter litoralis (strain HTCC2594).